Reading from the N-terminus, the 932-residue chain is DNA mismatch repair protein MutS (932 aa).

615–622 contributes to the ATP binding site; it reads GPNMAGKS.

This sequence belongs to the DNA mismatch repair MutS family.

Functionally, this protein is involved in the repair of mismatches in DNA. It is possible that it carries out the mismatch recognition step. This protein has a weak ATPase activity. This chain is DNA mismatch repair protein MutS, found in Clostridium botulinum (strain Loch Maree / Type A3).